A 224-amino-acid polypeptide reads, in one-letter code: Octanoyl-[acyl-carrier-protein]:protein N-octanoyltransferase LIPT2, mitochondrial (224 aa).

The region spanning 37-217 is the BPL/LPL catalytic domain; the sequence is SNIPNTLLLC…AFTEQFNCTL (181 aa). Substrate contacts are provided by residues 81–88, 147–149, and 160–162; these read RGGLITFH, AIG, and GLA. Residue cysteine 178 is the Acyl-thioester intermediate of the active site.

It belongs to the LipB family.

It localises to the mitochondrion. The enzyme catalyses octanoyl-[ACP] + L-lysyl-[protein] = N(6)-octanoyl-L-lysyl-[protein] + holo-[ACP] + H(+). The protein operates within protein modification; protein lipoylation via endogenous pathway; protein N(6)-(lipoyl)lysine from octanoyl-[acyl-carrier-protein]: step 1/2. In terms of biological role, catalyzes the transfer of endogenously produced octanoic acid from octanoyl-acyl-carrier-protein (octanoyl-ACP) onto the lipoyl domains of lipoate-dependent enzymes such as the protein H of the glycine cleavage system (GCSH). Lipoyl-ACP can also act as a substrate although octanoyl-ACP is likely to be the physiological substrate. The protein is Octanoyl-[acyl-carrier-protein]:protein N-octanoyltransferase LIPT2, mitochondrial (lipt2) of Danio rerio (Zebrafish).